Consider the following 556-residue polypeptide: Arginine--tRNA ligase (556 aa).

Residues 132-142 (ANPTGDLHLGH) carry the 'HIGH' region motif.

Belongs to the class-I aminoacyl-tRNA synthetase family. In terms of assembly, monomer.

Its subcellular location is the cytoplasm. It catalyses the reaction tRNA(Arg) + L-arginine + ATP = L-arginyl-tRNA(Arg) + AMP + diphosphate. The sequence is that of Arginine--tRNA ligase from Bacillus cereus (strain ATCC 14579 / DSM 31 / CCUG 7414 / JCM 2152 / NBRC 15305 / NCIMB 9373 / NCTC 2599 / NRRL B-3711).